Consider the following 469-residue polypeptide: 3-isopropylmalate dehydratase large subunit (469 aa).

Residues Cys-347, Cys-410, and Cys-413 each contribute to the [4Fe-4S] cluster site.

It belongs to the aconitase/IPM isomerase family. LeuC type 1 subfamily. Heterodimer of LeuC and LeuD. Requires [4Fe-4S] cluster as cofactor.

It carries out the reaction (2R,3S)-3-isopropylmalate = (2S)-2-isopropylmalate. Its pathway is amino-acid biosynthesis; L-leucine biosynthesis; L-leucine from 3-methyl-2-oxobutanoate: step 2/4. Catalyzes the isomerization between 2-isopropylmalate and 3-isopropylmalate, via the formation of 2-isopropylmaleate. This is 3-isopropylmalate dehydratase large subunit from Burkholderia orbicola (strain MC0-3).